A 352-amino-acid chain; its full sequence is Protein Wnt-11 (352 aa).

An N-terminal signal peptide occupies residues 1-22; the sequence is MKIYFLLGTFLTFLLHTRICQG. N-linked (GlcNAc...) asparagine glycosylation is found at N38 and N88. 5 cysteine pairs are disulfide-bonded: C78/C89, C128/C136, C138/C155, C207/C221, and C209/C216. The O-palmitoleoyl serine; by PORCN moiety is linked to residue S213. Sulfotyrosine occurs at positions 273 and 280. Disulfide bonds link C281–C312, C297–C307, C311–C351, C327–C342, C329–C339, and C334–C335. N-linked (GlcNAc...) asparagine glycosylation is present at N298.

It belongs to the Wnt family. Glycosylation is required for protein secretion. Post-translationally, palmitoleoylation is required for efficient binding to frizzled receptors. Depalmitoleoylation leads to Wnt signaling pathway inhibition. In terms of tissue distribution, in embryos, expressed in the neural tube, dorsal somite, mesenchymal cells within the dorsal fin, branchial arches and heart muscle, becoming expressed throughout the myocardium by the tadpole stage (stage 45). Prior to neural crest cell migration, expressed in a domain flanking the neural crest on the medial or neural (the opposite side to wnt11b). Weakly expressed in the developing pronephros from stage 25, with expression increasing from stages 30 to 35.

It is found in the secreted. Its subcellular location is the extracellular space. The protein localises to the extracellular matrix. In terms of biological role, ligand for members of the frizzled family of seven transmembrane receptors. Shares much functionality with wnt11b. Signals through a non-canonical Wnt pathway to activate Jun-N-terminal kinase (JNK) to regulate gastrulation movements. Acts in a non-cell-autonomous manner to control neural crest migration, probably acting as an extracellular signal from surrounding tissue, but is not required for neural crest induction. Acts redundantly with wnt11b during pronephros induction. Regulates cardiac morphogenesis through the activation of JNK, but is not required for cardiac differentiation. Essential for dorsal fin development; required for an epithelial to mesenchymal transformation event prior to migration of cells into the fin, and ultimately for maintenance of fin structure. Mediates dorsal fin development through a non-canonical pathway mediated by Ca(2+). This Xenopus laevis (African clawed frog) protein is Protein Wnt-11.